The following is a 698-amino-acid chain: RNA cytosine-C(5)-methyltransferase NSUN2 (698 aa).

A compositionally biased stretch (basic residues) spans 1–10 (MGRKNRRNRQ). A disordered region spans residues 1–28 (MGRKNRRNRQRRTEQRSPAEEERRKARE). Residues 11–28 (RRTEQRSPAEEERRKARE) are compositionally biased toward basic and acidic residues. S-adenosyl-L-methionine-binding positions include 182–188 (CAAPGSK), Asp213, Asp240, and Asp266. The active-site Nucleophile is the Cys319. The segment at 472 to 496 (AVDAENGETKPCTNQSGSSKTDSVC) is disordered. Over residues 482–493 (PCTNQSGSSKTD) the composition is skewed to polar residues.

It belongs to the class I-like SAM-binding methyltransferase superfamily. RsmB/NOP family. TRM4 subfamily.

It localises to the nucleus. It is found in the nucleolus. The protein localises to the cytoplasm. The protein resides in the mitochondrion. Its subcellular location is the cytoskeleton. It localises to the spindle. It is found in the secreted. The protein localises to the extracellular exosome. The enzyme catalyses cytidine(48) in tRNA + S-adenosyl-L-methionine = 5-methylcytidine(48) in tRNA + S-adenosyl-L-homocysteine + H(+). It carries out the reaction cytidine(49) in tRNA + S-adenosyl-L-methionine = 5-methylcytidine(49) in tRNA + S-adenosyl-L-homocysteine + H(+). The catalysed reaction is cytidine(50) in tRNA + S-adenosyl-L-methionine = 5-methylcytidine(50) in tRNA + S-adenosyl-L-homocysteine + H(+). It catalyses the reaction cytidine(34) in tRNA precursor + S-adenosyl-L-methionine = 5-methylcytidine(34) in tRNA precursor + S-adenosyl-L-homocysteine + H(+). The enzyme catalyses a cytidine in mRNA + S-adenosyl-L-methionine = a 5-methylcytidine in mRNA + S-adenosyl-L-homocysteine + H(+). Functionally, RNA cytosine C(5)-methyltransferase that methylates cytosine to 5-methylcytosine (m5C) in various RNAs, such as tRNAs, mRNAs and some long non-coding RNAs (lncRNAs). Involved in various processes, such as epidermal stem cell differentiation, testis differentiation and maternal to zygotic transition during early development: acts by increasing protein synthesis; cytosine C(5)-methylation promoting tRNA stability and preventing mRNA decay. Methylates cytosine to 5-methylcytosine (m5C) at positions 34 and 48 of intron-containing tRNA(Leu)(CAA) precursors, and at positions 48, 49 and 50 of tRNA(Gly)(GCC) precursors. tRNA methylation is required generation of RNA fragments derived from tRNAs (tRFs). Also mediates C(5)-methylation of mitochondrial tRNAs. Catalyzes cytosine C(5)-methylation of mRNAs, leading to stabilize them and prevent mRNA decay. Cytosine C(5)-methylation of mRNAs also regulates mRNA export. Also mediates cytosine C(5)-methylation of non-coding RNAs, such as vault RNAs (vtRNAs), promoting their processing into regulatory small RNAs. Required for proper spindle assembly and chromosome segregation, independently of its methyltransferase activity. The polypeptide is RNA cytosine-C(5)-methyltransferase NSUN2 (Xenopus laevis (African clawed frog)).